Consider the following 446-residue polypeptide: Mitochondrial distribution and morphology protein 12 (446 aa).

The region spanning 1–446 (MSIDINWEAA…VYPSFWTFLV (446 aa)) is the SMP-LTD domain. The span at 75–85 (DNEIGDGEVSD) shows a compositional bias: acidic residues. Disordered regions lie at residues 75–106 (DNEI…SAAD), 126–145 (PHDV…PIRS), and 188–283 (TPLS…RVRE). The segment covering 126 to 138 (PHDVPIPSKEDPL) has biased composition (basic and acidic residues). Residues 233 to 246 (TGNSRPSTADTLDS) are compositionally biased toward polar residues. Basic and acidic residues predominate over residues 260-274 (SSDDAHPNVLPRRDN).

Belongs to the MDM12 family. As to quaternary structure, component of the ER-mitochondria encounter structure (ERMES) or MDM complex, composed of MMM1, MDM10, MDM12 and MDM34. An MMM1 homodimer associates with one molecule of MDM12 on each side in a pairwise head-to-tail manner, and the SMP-LTD domains of MMM1 and MDM12 generate a continuous hydrophobic tunnel for phospholipid trafficking.

The protein localises to the mitochondrion outer membrane. Its subcellular location is the endoplasmic reticulum membrane. In terms of biological role, component of the ERMES/MDM complex, which serves as a molecular tether to connect the endoplasmic reticulum (ER) and mitochondria. Components of this complex are involved in the control of mitochondrial shape and protein biogenesis, and function in nonvesicular lipid trafficking between the ER and mitochondria. MDM12 is required for the interaction of the ER-resident membrane protein MMM1 and the outer mitochondrial membrane-resident beta-barrel protein MDM10. The MDM12-MMM1 subcomplex functions in the major beta-barrel assembly pathway that is responsible for biogenesis of all mitochondrial outer membrane beta-barrel proteins, and acts in a late step after the SAM complex. The MDM10-MDM12-MMM1 subcomplex further acts in the TOM40-specific pathway after the action of the MDM12-MMM1 complex. Essential for establishing and maintaining the structure of mitochondria and maintenance of mtDNA nucleoids. The sequence is that of Mitochondrial distribution and morphology protein 12 from Coccidioides immitis (strain RS) (Valley fever fungus).